Here is a 261-residue protein sequence, read N- to C-terminus: Carnitinyl-CoA dehydratase (261 aa).

E111 functions as the Nucleophile in the catalytic mechanism. Residue E131 is the Proton acceptor of the active site.

This sequence belongs to the enoyl-CoA hydratase/isomerase family.

The catalysed reaction is (R)-carnitinyl-CoA = crotonobetainyl-CoA + H2O. It participates in amine and polyamine metabolism; carnitine metabolism. Its function is as follows. Catalyzes the reversible dehydration of L-carnitinyl-CoA to crotonobetainyl-CoA. This chain is Carnitinyl-CoA dehydratase, found in Salmonella typhi.